Consider the following 654-residue polypeptide: uncharacterized protein (654 aa).

Polar residues predominate over residues 1–13 (MSNLILTPSNNGT). The segment at 1 to 23 (MSNLILTPSNNGTERPYRSRKTR) is disordered. Positions 25–54 (CDNCRLRKSRCVVESIGNPCLLCTQLKIPC) form a DNA-binding region, zn(2)-C6 fungal-type. The disordered stretch occupies residues 63-96 (RNKQKKQQDSVSDDTPSEATTTTNDDRDPKYNAL).

The protein resides in the cytoplasm. The protein localises to the nucleus. This is an uncharacterized protein from Schizosaccharomyces pombe (strain 972 / ATCC 24843) (Fission yeast).